A 145-amino-acid polypeptide reads, in one-letter code: Ribonuclease H (145 aa).

The region spanning 1–141 is the RNase H type-1 domain; the sequence is MQEVTIYSDG…ADALANRGVA (141 aa). Positions 9, 47, 69, and 133 each coordinate Mg(2+).

Belongs to the RNase H family. Monomer. It depends on Mg(2+) as a cofactor.

Its subcellular location is the cytoplasm. It carries out the reaction Endonucleolytic cleavage to 5'-phosphomonoester.. Its function is as follows. Endonuclease that specifically degrades the RNA of RNA-DNA hybrids. The chain is Ribonuclease H from Cupriavidus metallidurans (strain ATCC 43123 / DSM 2839 / NBRC 102507 / CH34) (Ralstonia metallidurans).